Here is a 466-residue protein sequence, read N- to C-terminus: DNA polymerase delta subunit 3 (466 aa).

The residue at position 2 (Ala2) is an N-acetylalanine. Disordered regions lie at residues Asn169–Gln188 and Lys199–Gly232. The segment covering Glu206–Glu217 has biased composition (basic and acidic residues). Residue Lys258 forms a Glycyl lysine isopeptide (Lys-Gly) (interchain with G-Cter in SUMO); alternate linkage. Lys258 is covalently cross-linked (Glycyl lysine isopeptide (Lys-Gly) (interchain with G-Cter in SUMO2); alternate). Lys261 is covalently cross-linked (Glycyl lysine isopeptide (Lys-Gly) (interchain with G-Cter in SUMO2)). Disordered regions lie at residues Lys274–Leu393 and Glu406–Lys466. Thr277 is modified (phosphothreonine). Over residues Lys286–Lys296 the composition is skewed to basic and acidic residues. Position 307 is a phosphoserine (Ser307). Residues Pro349–Pro361 are compositionally biased toward pro residues. Residues Ser407 and Ser409 each carry the phosphoserine modification. Thr411 carries the phosphothreonine modification. At Ser413 the chain carries Phosphoserine. A compositionally biased stretch (basic and acidic residues) spans Val432–Lys441. Lys433 is covalently cross-linked (Glycyl lysine isopeptide (Lys-Gly) (interchain with G-Cter in SUMO); alternate). Lys433 is covalently cross-linked (Glycyl lysine isopeptide (Lys-Gly) (interchain with G-Cter in SUMO2); alternate). The segment covering Arg455–Lys466 has biased composition (polar residues). The PIP-box motif lies at Gln456 to Phe463. Ser458 bears the Phosphoserine mark.

Component of both the DNA polymerase delta and DNA polymerase zeta complexes. The tetrameric DNA polymerase delta complex (Pol-delta4), which consists of POLD1/p125, POLD2/p50, POLD3/p66/p68 and POLD4/p12, with POLD1 bearing DNA polymerase and 3' to 5' proofreading exonuclease activities. Within this complex, directly interacts with POLD2. Following stress caused by DNA damaging agents or by replication stress, POLD4 is degraded and Pol-delta4 is converted into a trimeric form of the complex (Pol-delta3), which consists of POLD1, POLD2 and POLD3. Pol-delta3 is the major form occurring at S phase replication sites, as well as DNA damage sites. Directly interacts with PCNA, as do POLD1 and POLD4; this interaction stimulates Pol-delta polymerase activity. POLD3 phosphorylation at Ser-458 impairs PCNA binding. Component of the DNA polymerase zeta complex (POLZ), which consists of REV3L, MAD2L2, POLD2 and POLD3, with REV3L bearing DNA polymerase catalytic activity. The DNA polymerase delta complex interacts with POLDIP2; this interaction is probably mediated through direct binding to POLD2. Ubiquitinated, but not targeted to the proteasome. Sumoylated. Sumoylation with SUMO3 may be predominant. In terms of processing, phosphorylation at Ser-458 is catalyzed in vitro by PKA. It is thought to decrease the affinity for PCNA and Pol-delta4 processivity. Can also be phosphorylated in vitro by CDK1-cyclin-A complex, as well as CDK2-cyclin-A and CDK2-cyclin-E complexes. PCNA interferes with CDK-cyclin phosphorylation.

It is found in the cytoplasm. The protein resides in the nucleus. Accessory component of both the DNA polymerase delta complex and the DNA polymerase zeta complex. As a component of the trimeric and tetrameric DNA polymerase delta complexes (Pol-delta3 and Pol-delta4, respectively), plays a role in high fidelity genome replication, including in lagging strand synthesis, and repair. Required for optimal Pol-delta activity. Stabilizes the Pol-delta complex and plays a major role in Pol-delta stimulation by PCNA. Pol-delta3 and Pol-delta4 are characterized by the absence or the presence of POLD4. They exhibit differences in catalytic activity. Most notably, Pol-delta3 shows higher proofreading activity than Pol-delta4. Although both Pol-delta3 and Pol-delta4 process Okazaki fragments in vitro, Pol-delta3 may also be better suited to fulfill this task, exhibiting near-absence of strand displacement activity compared to Pol-delta4 and stalling on encounter with the 5'-blocking oligonucleotides. Pol-delta3 idling process may avoid the formation of a gap, while maintaining a nick that can be readily ligated. Along with DNA polymerase kappa, DNA polymerase delta carries out approximately half of nucleotide excision repair (NER) synthesis following UV irradiation. In this context, POLD3, along with PCNA and RFC1-replication factor C complex, is required to recruit POLD1, the catalytic subunit of the polymerase delta complex, to DNA damage sites. Under conditions of DNA replication stress, required for the repair of broken replication forks through break-induced replication (BIR). Involved in the translesion synthesis (TLS) of templates carrying O6-methylguanine or abasic sites performed by Pol-delta4, independently of DNA polymerase zeta (REV3L) or eta (POLH). Facilitates abasic site bypass by DNA polymerase delta by promoting extension from the nucleotide inserted opposite the lesion. Also involved in TLS, as a component of the tetrameric DNA polymerase zeta complex. Along with POLD2, dramatically increases the efficiency and processivity of DNA synthesis of the DNA polymerase zeta complex compared to the minimal zeta complex, consisting of only REV3L and REV7. The chain is DNA polymerase delta subunit 3 (POLD3) from Homo sapiens (Human).